The primary structure comprises 121 residues: Dihydroneopterin aldolase (121 aa).

Substrate contacts are provided by Glu-25 and Met-114.

It belongs to the archaeal dihydroneopterin aldolase family. Homotetramer.

It catalyses the reaction 7,8-dihydroneopterin = 6-hydroxymethyl-7,8-dihydropterin + glycolaldehyde. Its pathway is cofactor biosynthesis; 5,6,7,8-tetrahydromethanopterin biosynthesis. In terms of biological role, catalyzes the conversion of 7,8-dihydroneopterin (H2Neo) to 6-hydroxymethyl-7,8-dihydropterin (6-HMD). The chain is Dihydroneopterin aldolase from Methanocaldococcus jannaschii (strain ATCC 43067 / DSM 2661 / JAL-1 / JCM 10045 / NBRC 100440) (Methanococcus jannaschii).